The primary structure comprises 546 residues: DDB1- and CUL4-associated factor 11 (546 aa).

The segment covering 1 to 10 has biased composition (polar residues); sequence MGSRNSSSAG. The tract at residues 1–40 is disordered; that stretch reads MGSRNSSSAGTGSGDPSEGLPRRGAGLRRSEEEEEEDEDV. Residues S73 and S75 each carry the phosphoserine modification. The disordered stretch occupies residues 79 to 100; that stretch reads HDSAWDGRLGDRYNPPVDATPD. The segment covering 80–89 has biased composition (basic and acidic residues); sequence DSAWDGRLGD. WD repeat units follow at residues 170-210, 216-258, 263-302, 305-345, 353-392, 435-480, and 481-520; these read TYSQ…RKFK, DVGW…TALD, ERRFAVFSIAVSSDGREVLGGANDGCLYVFDREQNRRTLQ, SHED…EDDP, GHQDGITFIDSKGDARYLISNSKDQTIKLWDIRRFSSREG, GVLH…KKLT, and THKACVRDVSWHPFEEKIVSSSWDGNLRLWQYRQAEYFQD. Residues 521–546 are disordered; it reads DMPESEEHPSTPAPMSHPSTAFSSPQ. Polar residues predominate over residues 537 to 546; sequence HPSTAFSSPQ.

As to quaternary structure, interacts with DDB1 and CUL4A.

It participates in protein modification; protein ubiquitination. May function as a substrate receptor for CUL4-DDB1 E3 ubiquitin-protein ligase complex. The sequence is that of DDB1- and CUL4-associated factor 11 (DCAF11) from Bos taurus (Bovine).